We begin with the raw amino-acid sequence, 185 residues long: Ribosome-recycling factor (185 aa).

The protein belongs to the RRF family.

The protein localises to the cytoplasm. Responsible for the release of ribosomes from messenger RNA at the termination of protein biosynthesis. May increase the efficiency of translation by recycling ribosomes from one round of translation to another. This chain is Ribosome-recycling factor, found in Pseudomonas putida (strain ATCC 700007 / DSM 6899 / JCM 31910 / BCRC 17059 / LMG 24140 / F1).